The following is a 355-amino-acid chain: Protein RecA (355 aa).

67-74 (GPESSGKT) serves as a coordination point for ATP.

The protein belongs to the RecA family.

It is found in the cytoplasm. Its function is as follows. Can catalyze the hydrolysis of ATP in the presence of single-stranded DNA, the ATP-dependent uptake of single-stranded DNA by duplex DNA, and the ATP-dependent hybridization of homologous single-stranded DNAs. It interacts with LexA causing its activation and leading to its autocatalytic cleavage. This Shewanella piezotolerans (strain WP3 / JCM 13877) protein is Protein RecA.